A 739-amino-acid polypeptide reads, in one-letter code: Probable beta-glucosidase L (739 aa).

The N-terminal stretch at 1 to 17 (MQNLFLSLLAAAVTVHA) is a signal peptide. Residue asparagine 224 is glycosylated (N-linked (GlcNAc...) asparagine). Residue aspartate 252 is part of the active site. N-linked (GlcNAc...) asparagine glycosylation is present at asparagine 398.

This sequence belongs to the glycosyl hydrolase 3 family.

Its subcellular location is the secreted. It catalyses the reaction Hydrolysis of terminal, non-reducing beta-D-glucosyl residues with release of beta-D-glucose.. It functions in the pathway glycan metabolism; cellulose degradation. Its function is as follows. Beta-glucosidases are one of a number of cellulolytic enzymes involved in the degradation of cellulosic biomass. Catalyzes the last step releasing glucose from the inhibitory cellobiose. This is Probable beta-glucosidase L (bglL) from Neosartorya fischeri (strain ATCC 1020 / DSM 3700 / CBS 544.65 / FGSC A1164 / JCM 1740 / NRRL 181 / WB 181) (Aspergillus fischerianus).